A 216-amino-acid chain; its full sequence is Holliday junction branch migration complex subunit RuvA (216 aa).

The domain I stretch occupies residues 1–64 (MISFIKGVLI…EDAQQLYGFK (64 aa)). Positions 65–143 (SKVDKKVFQE…KMANEIYAQT (79 aa)) are domain II. Residues 144 to 163 (SGTTTTSQDSQAQQAPTSVV) are flexible linker. Residues 164–216 (LANSIFNESVDALLALGYKQKDAEKMARSAMGDATTAAEVIRKALQGSIKSKG) are domain III.

The protein belongs to the RuvA family. Homotetramer. Forms an RuvA(8)-RuvB(12)-Holliday junction (HJ) complex. HJ DNA is sandwiched between 2 RuvA tetramers; dsDNA enters through RuvA and exits via RuvB. An RuvB hexamer assembles on each DNA strand where it exits the tetramer. Each RuvB hexamer is contacted by two RuvA subunits (via domain III) on 2 adjacent RuvB subunits; this complex drives branch migration. In the full resolvosome a probable DNA-RuvA(4)-RuvB(12)-RuvC(2) complex forms which resolves the HJ.

Its subcellular location is the cytoplasm. Its function is as follows. The RuvA-RuvB-RuvC complex processes Holliday junction (HJ) DNA during genetic recombination and DNA repair, while the RuvA-RuvB complex plays an important role in the rescue of blocked DNA replication forks via replication fork reversal (RFR). RuvA specifically binds to HJ cruciform DNA, conferring on it an open structure. The RuvB hexamer acts as an ATP-dependent pump, pulling dsDNA into and through the RuvAB complex. HJ branch migration allows RuvC to scan DNA until it finds its consensus sequence, where it cleaves and resolves the cruciform DNA. In Francisella tularensis subsp. holarctica (strain FTNF002-00 / FTA), this protein is Holliday junction branch migration complex subunit RuvA.